The sequence spans 274 residues: Diaminopimelate epimerase (274 aa).

Substrate is bound by residues asparagine 11, glutamine 44, and asparagine 64. Cysteine 73 acts as the Proton donor in catalysis. Residues glycine 74–asparagine 75, asparagine 157, asparagine 190, and glutamate 208–arginine 209 each bind substrate. The Proton acceptor role is filled by cysteine 217. Glycine 218–serine 219 is a substrate binding site.

The protein belongs to the diaminopimelate epimerase family. In terms of assembly, homodimer.

Its subcellular location is the cytoplasm. The enzyme catalyses (2S,6S)-2,6-diaminopimelate = meso-2,6-diaminopimelate. Its pathway is amino-acid biosynthesis; L-lysine biosynthesis via DAP pathway; DL-2,6-diaminopimelate from LL-2,6-diaminopimelate: step 1/1. Functionally, catalyzes the stereoinversion of LL-2,6-diaminopimelate (L,L-DAP) to meso-diaminopimelate (meso-DAP), a precursor of L-lysine and an essential component of the bacterial peptidoglycan. This Salmonella agona (strain SL483) protein is Diaminopimelate epimerase.